The sequence spans 385 residues: Probable tRNA sulfurtransferase (385 aa).

The region spanning 57–160 is the THUMP domain; that stretch reads DGVIERVKKV…RGNAYVFTDK (104 aa). Residues 180–181, 205–206, Arg-262, Gly-284, and Gln-293 contribute to the ATP site; these read ML and YY.

Belongs to the ThiI family.

The protein localises to the cytoplasm. It carries out the reaction [ThiI sulfur-carrier protein]-S-sulfanyl-L-cysteine + a uridine in tRNA + 2 reduced [2Fe-2S]-[ferredoxin] + ATP + H(+) = [ThiI sulfur-carrier protein]-L-cysteine + a 4-thiouridine in tRNA + 2 oxidized [2Fe-2S]-[ferredoxin] + AMP + diphosphate. The enzyme catalyses [ThiS sulfur-carrier protein]-C-terminal Gly-Gly-AMP + S-sulfanyl-L-cysteinyl-[cysteine desulfurase] + AH2 = [ThiS sulfur-carrier protein]-C-terminal-Gly-aminoethanethioate + L-cysteinyl-[cysteine desulfurase] + A + AMP + 2 H(+). The protein operates within cofactor biosynthesis; thiamine diphosphate biosynthesis. Its function is as follows. Catalyzes the ATP-dependent transfer of a sulfur to tRNA to produce 4-thiouridine in position 8 of tRNAs, which functions as a near-UV photosensor. Also catalyzes the transfer of sulfur to the sulfur carrier protein ThiS, forming ThiS-thiocarboxylate. This is a step in the synthesis of thiazole, in the thiamine biosynthesis pathway. The sulfur is donated as persulfide by IscS. The sequence is that of Probable tRNA sulfurtransferase from Clostridium perfringens (strain 13 / Type A).